The sequence spans 616 residues: Dihydroxy-acid dehydratase (616 aa).

Aspartate 81 contacts Mg(2+). Cysteine 122 contributes to the [2Fe-2S] cluster binding site. 2 residues coordinate Mg(2+): aspartate 123 and lysine 124. Residue lysine 124 is modified to N6-carboxylysine. Residue cysteine 195 coordinates [2Fe-2S] cluster. Glutamate 491 is a binding site for Mg(2+). The active-site Proton acceptor is serine 517.

Belongs to the IlvD/Edd family. In terms of assembly, homodimer. The cofactor is [2Fe-2S] cluster. It depends on Mg(2+) as a cofactor.

The catalysed reaction is (2R)-2,3-dihydroxy-3-methylbutanoate = 3-methyl-2-oxobutanoate + H2O. The enzyme catalyses (2R,3R)-2,3-dihydroxy-3-methylpentanoate = (S)-3-methyl-2-oxopentanoate + H2O. It participates in amino-acid biosynthesis; L-isoleucine biosynthesis; L-isoleucine from 2-oxobutanoate: step 3/4. The protein operates within amino-acid biosynthesis; L-valine biosynthesis; L-valine from pyruvate: step 3/4. Functions in the biosynthesis of branched-chain amino acids. Catalyzes the dehydration of (2R,3R)-2,3-dihydroxy-3-methylpentanoate (2,3-dihydroxy-3-methylvalerate) into 2-oxo-3-methylpentanoate (2-oxo-3-methylvalerate) and of (2R)-2,3-dihydroxy-3-methylbutanoate (2,3-dihydroxyisovalerate) into 2-oxo-3-methylbutanoate (2-oxoisovalerate), the penultimate precursor to L-isoleucine and L-valine, respectively. The protein is Dihydroxy-acid dehydratase of Escherichia coli O9:H4 (strain HS).